We begin with the raw amino-acid sequence, 286 residues long: Bifunctional protein FolD 2 (286 aa).

Residues G165–G167, T192, and V233 contribute to the NADP(+) site.

The protein belongs to the tetrahydrofolate dehydrogenase/cyclohydrolase family. As to quaternary structure, homodimer.

It carries out the reaction (6R)-5,10-methylene-5,6,7,8-tetrahydrofolate + NADP(+) = (6R)-5,10-methenyltetrahydrofolate + NADPH. It catalyses the reaction (6R)-5,10-methenyltetrahydrofolate + H2O = (6R)-10-formyltetrahydrofolate + H(+). Its pathway is one-carbon metabolism; tetrahydrofolate interconversion. In terms of biological role, catalyzes the oxidation of 5,10-methylenetetrahydrofolate to 5,10-methenyltetrahydrofolate and then the hydrolysis of 5,10-methenyltetrahydrofolate to 10-formyltetrahydrofolate. The polypeptide is Bifunctional protein FolD 2 (Rhodococcus jostii (strain RHA1)).